The following is a 213-amino-acid chain: Motile sperm domain-containing protein 1 (213 aa).

Positions 16–143 constitute an MSP domain; the sequence is PVFVFPTELI…KEHLTESVFF (128 aa). The next 2 membrane-spanning stretches (helical) occupy residues 159–179 and 191–211; these read SLLT…PTLG and LSVN…MAIL. The Nuclear export signal signature appears at 205–208; the sequence is LITM.

It localises to the endoplasmic reticulum membrane. The protein resides in the golgi apparatus membrane. In terms of biological role, plays a role in differentiation and/or proliferation of mesenchymal stem cells. Proposed to be involved in epithelial-to-mesenchymal transition (EMT). However, another study suggests that it is not required for EMT or stem cell self-renewal and acts during later stages of differentiation. This is Motile sperm domain-containing protein 1 (Mospd1) from Rattus norvegicus (Rat).